The chain runs to 396 residues: tRNA-specific 2-thiouridylase MnmA (396 aa).

Residues 35–42 and Leu61 contribute to the ATP site; that span reads GLSGGVDS. Residue Cys122 is the Nucleophile of the active site. A disulfide bridge connects residues Cys122 and Cys221. Gly147 provides a ligand contact to ATP. The tract at residues 171–173 is interaction with tRNA; it reads KDQ. Cys221 functions as the Cysteine persulfide intermediate in the catalytic mechanism. The tract at residues 326–327 is interaction with tRNA; sequence RY.

It belongs to the MnmA/TRMU family.

It localises to the cytoplasm. The catalysed reaction is S-sulfanyl-L-cysteinyl-[protein] + uridine(34) in tRNA + AH2 + ATP = 2-thiouridine(34) in tRNA + L-cysteinyl-[protein] + A + AMP + diphosphate + H(+). In terms of biological role, catalyzes the 2-thiolation of uridine at the wobble position (U34) of tRNA, leading to the formation of s(2)U34. The sequence is that of tRNA-specific 2-thiouridylase MnmA from Parasynechococcus marenigrum (strain WH8102).